The following is a 1194-amino-acid chain: Metabotropic glutamate receptor 1 (1194 aa).

The signal sequence occupies residues 1–18 (MVGLLLFFFPAIFLEVSL). Over 19–592 (LPRSPGRKVL…VRYLEWSNIE (574 aa)) the chain is Extracellular. C67 and C109 are joined by a disulfide. Residue Y74 participates in L-glutamate binding. N98 carries an N-linked (GlcNAc...) asparagine glycan. L-glutamate-binding positions include S165 and 186–188 (SAT). An N-linked (GlcNAc...) asparagine glycan is attached at N223. Y236 is an L-glutamate binding site. Cysteines 289 and 291 form a disulfide. Position 318 (D318) interacts with L-glutamate. C378 and C394 are disulfide-bonded. An N-linked (GlcNAc...) asparagine glycan is attached at N397. K409 serves as a coordination point for L-glutamate. The cysteines at positions 432 and 439 are disulfide-linked. N-linked (GlcNAc...) asparagine glycosylation is present at N515. A helical transmembrane segment spans residues 593 to 615 (SIIAIAFSCLGILVTLFVTLIFV). Over 616–629 (LYRDTPVVKSSSRE) the chain is Cytoplasmic. A helical transmembrane segment spans residues 630 to 650 (LCYIILAGIFLGYVCPFTLIA). Residues 651 to 658 (KPTTTSCY) lie on the Extracellular side of the membrane. A disulfide bridge connects residues C657 and C746. Residues 659–680 (LQRLLVGLSSAMCYSALVTKTN) form a helical membrane-spanning segment. The Cytoplasmic portion of the chain corresponds to 681–703 (RIARILAGSKKKICTRKPRFMSA). The helical transmembrane segment at 704-727 (WAQVIIASILISVQLTLVVTLIIM) threads the bilayer. Residues 728 to 750 (EPPMPILSYPSIKEVYLICNTSN) lie on the Extracellular side of the membrane. A helical transmembrane segment spans residues 751–772 (LGVVAPLGYNGLLIMSCTYYAF). At 773–785 (KTRNVPANFNEAK) the chain is on the cytoplasmic side. A helical transmembrane segment spans residues 786–807 (YIAFTMYTTCIIWLAFVPIYFG). Residues 808–815 (SNYKIITT) lie on the Extracellular side of the membrane. A helical membrane pass occupies residues 816–840 (CFAVSLSVTVALGCMFTPKMYIIIA). Topologically, residues 841–1194 (KPERNVRSAF…RDYKQSSSTL (354 aa)) are cytoplasmic. At S853 the chain carries Phosphoserine. T871 bears the Phosphothreonine mark. The interval 883 to 905 (AGNANSNGKSVSWSEPGGGQVPK) is disordered. Over residues 885 to 895 (NANSNGKSVSW) the composition is skewed to polar residues. S894 and S969 each carry phosphoserine. The interval 1007-1030 (PALPKGLPPPLQQQQQPPPQQKSL) is disordered. Over residues 1012–1026 (GLPPPLQQQQQPPPQ) the composition is skewed to pro residues. S1091 is modified (phosphoserine). The segment at 1113-1173 (HEREGNTEED…SPVSESVLCT (61 aa)) is disordered. The span at 1119–1131 (TEEDELEEEEEDL) shows a compositional bias: acidic residues. S1142 is modified (phosphoserine). T1146 carries the post-translational modification Phosphothreonine. At S1149 the chain carries Phosphoserine. Residues 1154 to 1170 (SVASGSSVPSSPVSESV) are compositionally biased toward low complexity.

Belongs to the G-protein coupled receptor 3 family. Homodimer; disulfide-linked. The PPXXF motif binds HOMER1, HOMER2 and HOMER3. Interacts with TAMALIN. Interacts with RYR1, RYR2, ITPR1, SHANK1 and SHANK3. Interacts with SIAH1. As to expression, detected in brain.

The protein resides in the cell membrane. Its subcellular location is the postsynaptic cell membrane. The protein localises to the cell projection. It localises to the dendrite. With respect to regulation, signaling is inhibited by the antagonist LY341495. The LY341495 binding site partially overlaps with the glutamate binding site. Signaling is also inhibited by synthetic allosteric regulators, such as FITM (4-fluoro-N-(4-(6-(isopropylamino)pyrimidin-4-yl)thiazol-2-yl)-N-methylbenzamide) that bind in a pocket between the transmembrane helices. G-protein coupled receptor for glutamate. Ligand binding causes a conformation change that triggers signaling via guanine nucleotide-binding proteins (G proteins) and modulates the activity of down-stream effectors. Signaling activates a phosphatidylinositol-calcium second messenger system. May participate in the central action of glutamate in the CNS, such as long-term potentiation in the hippocampus and long-term depression in the cerebellum. May function in the light response in the retina. Induces GRID1 and GRID2 cation-channel activation via GNAQ-PLC-PKC pathway in dopaminergic neurons and cerebellar Purkinje cell, respectively. In Homo sapiens (Human), this protein is Metabotropic glutamate receptor 1 (GRM1).